The sequence spans 282 residues: Formamidopyrimidine-DNA glycosylase (282 aa).

The active-site Schiff-base intermediate with DNA is Pro-2. The active-site Proton donor is Glu-3. Residue Lys-61 is the Proton donor; for beta-elimination activity of the active site. Positions 93, 112, and 158 each coordinate DNA. An FPG-type zinc finger spans residues 244 to 278 (DAYGREGEPCRRCGAIMRRDKFMNRSSFYCPRCQP). The Proton donor; for delta-elimination activity role is filled by Arg-268.

Belongs to the FPG family. As to quaternary structure, monomer. The cofactor is Zn(2+).

It catalyses the reaction Hydrolysis of DNA containing ring-opened 7-methylguanine residues, releasing 2,6-diamino-4-hydroxy-5-(N-methyl)formamidopyrimidine.. It carries out the reaction 2'-deoxyribonucleotide-(2'-deoxyribose 5'-phosphate)-2'-deoxyribonucleotide-DNA = a 3'-end 2'-deoxyribonucleotide-(2,3-dehydro-2,3-deoxyribose 5'-phosphate)-DNA + a 5'-end 5'-phospho-2'-deoxyribonucleoside-DNA + H(+). Involved in base excision repair of DNA damaged by oxidation or by mutagenic agents. Acts as a DNA glycosylase that recognizes and removes damaged bases. Has a preference for oxidized purines, such as 7,8-dihydro-8-oxoguanine (8-oxoG). Has AP (apurinic/apyrimidinic) lyase activity and introduces nicks in the DNA strand. Cleaves the DNA backbone by beta-delta elimination to generate a single-strand break at the site of the removed base with both 3'- and 5'-phosphates. This is Formamidopyrimidine-DNA glycosylase from Mycolicibacterium gilvum (strain PYR-GCK) (Mycobacterium gilvum (strain PYR-GCK)).